Consider the following 299-residue polypeptide: Tricarboxylate transport protein (299 aa).

3 Solcar repeats span residues 10–97 (VDPL…IKDM), 109–199 (TRGV…IKTL), and 212–297 (LSSG…VLVM). 6 helical membrane passes run 16–36 (FLAG…FEFA), 66–86 (IGSI…KAGI), 113–133 (IAGL…FEAI), 174–193 (GVLP…LGCY), 215–235 (GLTF…TMPL), and 272–291 (GATP…FTIY).

The protein belongs to the mitochondrial carrier (TC 2.A.29) family.

It localises to the mitochondrion inner membrane. Its function is as follows. Transport of citrate across inner mitochondrial membrane. This is Tricarboxylate transport protein (CTP1) from Saccharomyces cerevisiae (strain ATCC 204508 / S288c) (Baker's yeast).